Reading from the N-terminus, the 496-residue chain is Glutamyl-tRNA(Gln) amidotransferase subunit A (496 aa).

Catalysis depends on charge relay system residues Lys-75 and Ser-150. Residue Ser-174 is the Acyl-ester intermediate of the active site.

It belongs to the amidase family. GatA subfamily. As to quaternary structure, heterotrimer of A, B and C subunits.

The enzyme catalyses L-glutamyl-tRNA(Gln) + L-glutamine + ATP + H2O = L-glutaminyl-tRNA(Gln) + L-glutamate + ADP + phosphate + H(+). Functionally, allows the formation of correctly charged Gln-tRNA(Gln) through the transamidation of misacylated Glu-tRNA(Gln) in organisms which lack glutaminyl-tRNA synthetase. The reaction takes place in the presence of glutamine and ATP through an activated gamma-phospho-Glu-tRNA(Gln). This is Glutamyl-tRNA(Gln) amidotransferase subunit A from Burkholderia ambifaria (strain ATCC BAA-244 / DSM 16087 / CCUG 44356 / LMG 19182 / AMMD) (Burkholderia cepacia (strain AMMD)).